We begin with the raw amino-acid sequence, 284 residues long: MLSKQIPLGIYEKALPAGECWLERLRLAKTLGFDFVEMSVDETDARLARLDWSREQRLALVSAVAETGVRVPSMCLSAHRRFPLGSEDDAVRAQGLEIMRKAIQFAQDVGIRVIQLAGYDVYYQQANDETRCRFRDGLKESVDMASRAQVTLAMEIMDYPLMNSISKALGYAHYLNNPWFQLYPDIGNLSAWDNDVQMELQAGIGHIVAVHVKDTKPGVFKNVPFGEGVVDFERCFETLKQSGYCGPYLIEMWSETAENPAAEVAKARDWVKARMASAGLVEAA.

This sequence belongs to the L-ribulose-5-phosphate 3-epimerase family.

The catalysed reaction is L-ribulose 5-phosphate = L-xylulose 5-phosphate. It participates in cofactor degradation; L-ascorbate degradation; D-xylulose 5-phosphate from L-ascorbate: step 3/4. Catalyzes the isomerization of L-xylulose-5-phosphate to L-ribulose-5-phosphate. Is involved in the anaerobic L-ascorbate utilization. This Salmonella dublin (strain CT_02021853) protein is L-ribulose-5-phosphate 3-epimerase UlaE.